The following is an 831-amino-acid chain: Probable glucan 1,3-beta-glucosidase D (831 aa).

Basic and acidic residues-rich tracts occupy residues 1 to 24 (MPSHSRSRDRYRSERDPSRRYREV), 44 to 56 (RRDDYQHDIRSHE), 79 to 93 (RSHDVEGRRRERSRA), 102 to 115 (SRRDRNRGGEEYRR), 137 to 151 (RDGQRARPRDMDREA), and 198 to 213 (QRERSQEQEQPRMESK). 2 disordered regions span residues 1–179 (MPSH…SGSH) and 192–241 (HYDE…GQSK). At 1–297 (MPSHSRSRDR…AQPPFWKRKK (297 aa)) the chain is on the cytoplasmic side. A helical; Signal-anchor for type II membrane protein transmembrane segment spans residues 298-318 (WWIVIGVLVVVLAIVIPVAVV). Over 319–831 (MSKKHGHDDD…PSFGDLPEYY (513 aa)) the chain is Extracellular. N-linked (GlcNAc...) asparagine glycans are attached at residues Asn-376, Asn-381, Asn-393, Asn-410, Asn-442, Asn-546, and Asn-558. Glu-597 functions as the Proton donor in the catalytic mechanism. N-linked (GlcNAc...) asparagine glycans are attached at residues Asn-610, Asn-636, Asn-669, and Asn-689. The Nucleophile role is filled by Glu-702.

This sequence belongs to the glycosyl hydrolase 5 (cellulase A) family.

It localises to the cell membrane. The enzyme catalyses Successive hydrolysis of beta-D-glucose units from the non-reducing ends of (1-&gt;3)-beta-D-glucans, releasing alpha-glucose.. Its function is as follows. Glucosidase involved in the degradation of cellulosic biomass. Active on lichenan. This chain is Probable glucan 1,3-beta-glucosidase D (exgD), found in Aspergillus oryzae (strain ATCC 42149 / RIB 40) (Yellow koji mold).